The following is a 423-amino-acid chain: Glutaminase (423 aa).

The segment at 27–312 (GEVAQYIPQL…LSEDMGLHLM (286 aa)) is glutaminase. 7 residues coordinate substrate: serine 69, asparagine 119, glutamate 165, asparagine 172, tyrosine 196, tyrosine 248, and valine 266. One can recognise an STAS domain in the interval 321 to 423 (AVRAIEERGD…SPQVDDPEEL (103 aa)).

It belongs to the glutaminase family. In terms of assembly, homotetramer.

It catalyses the reaction L-glutamine + H2O = L-glutamate + NH4(+). In Corynebacterium efficiens (strain DSM 44549 / YS-314 / AJ 12310 / JCM 11189 / NBRC 100395), this protein is Glutaminase (glsA).